We begin with the raw amino-acid sequence, 293 residues long: Acetylglutamate kinase (293 aa).

Residues 70–71 (GG), R92, and N186 contribute to the substrate site.

It belongs to the acetylglutamate kinase family. ArgB subfamily.

It is found in the cytoplasm. It carries out the reaction N-acetyl-L-glutamate + ATP = N-acetyl-L-glutamyl 5-phosphate + ADP. It participates in amino-acid biosynthesis; L-arginine biosynthesis; N(2)-acetyl-L-ornithine from L-glutamate: step 2/4. Functionally, catalyzes the ATP-dependent phosphorylation of N-acetyl-L-glutamate. In Parasynechococcus marenigrum (strain WH8102), this protein is Acetylglutamate kinase.